The following is a 186-amino-acid chain: MAIADVKKNAQAKMEKTLNSLSEELKKVRTGRAQVSMLDGIRVNYYGTPSPLSQVASISTPDAKSFLIAPWEVAILKDIEQAIIKSELGMAPMNDGKVIRLKVPDLTEERRKDLAKQVKKIAEEARVAVRMARRDANDEVKKLQKDKAVSEDEGKKAEADIQKVTDDFIKKVDQVAEEKEKAILTI.

The disordered stretch occupies residues 135–156; it reads DANDEVKKLQKDKAVSEDEGKK.

The protein belongs to the RRF family.

It localises to the cytoplasm. In terms of biological role, responsible for the release of ribosomes from messenger RNA at the termination of protein biosynthesis. May increase the efficiency of translation by recycling ribosomes from one round of translation to another. This Bdellovibrio bacteriovorus (strain ATCC 15356 / DSM 50701 / NCIMB 9529 / HD100) protein is Ribosome-recycling factor.